The following is a 117-amino-acid chain: Hainantoxin-XV-2 (117 aa).

Positions methionine 1 to serine 20 are cleaved as a signal peptide. A disordered region spans residues serine 20–glutamate 55. A propeptide spanning residues serine 21–arginine 56 is cleaved from the precursor. Basic and acidic residues predominate over residues asparagine 23 to glutamate 55. 4 disulfide bridges follow: cysteine 58–cysteine 72, cysteine 65–cysteine 78, cysteine 69–cysteine 115, and cysteine 71–cysteine 91.

Belongs to the neurotoxin 03 (Tx2) family. 02 subfamily. HNTX-XV sub-subfamily. In terms of tissue distribution, expressed by the venom gland.

The protein resides in the secreted. Its function is as follows. Putative ion channel inhibitor. The polypeptide is Hainantoxin-XV-2 (Cyriopagopus hainanus (Chinese bird spider)).